The sequence spans 354 residues: Macrosialin (354 aa).

The first 21 residues, 1-21, serve as a signal peptide directing secretion; it reads MRLAVLFSGALLGLLAAQGTG. Residues 22-319 are Extracellular-facing; it reads NDCPHKKSAT…QSFSCPSDRS (298 aa). The tract at residues 23–140 is mucin-like; that stretch reads DCPHKKSATL…SPGFTSSAHP (118 aa). Residues 40–51 show a composition bias toward low complexity; the sequence is PTVTESTGTTSH. The tract at residues 40-162 is disordered; sequence PTVTESTGTT…SKETIGDYTW (123 aa). A compositionally biased stretch (basic residues) spans 52–61; sequence RTTKSHKTTT. The span at 62 to 84 shows a compositional bias: low complexity; it reads HRTTTTGTTSHGPTTATHNPTTT. 2 consecutive repeat copies span residues 70-99 and 100-129. Residues 70 to 129 are 2 X 30 AA tandem repeats; it reads TSHGPTTATHNPTTTSHGNVTVHPTSNSTATSQGPSTATHSPATTSHGNATVHPTSNSTA. Positions 85 to 102 are enriched in polar residues; the sequence is SHGNVTVHPTSNSTATSQ. 2 N-linked (GlcNAc...) asparagine glycosylation sites follow: Asn-88 and Asn-96. The segment covering 103–117 has biased composition (low complexity); that stretch reads GPSTATHSPATTSHG. Residues Asn-118 and Asn-126 are each glycosylated (N-linked (GlcNAc...) asparagine). The span at 121–135 shows a compositional bias: polar residues; sequence VHPTSNSTATSPGFT. A compositionally biased stretch (pro residues) spans 140–150; it reads PEPPPPSPSPS. Asn-164, Asn-199, Asn-246, Asn-261, and Asn-279 each carry an N-linked (GlcNAc...) asparagine glycan. Cys-169 and Cys-207 are oxidised to a cystine. An intrachain disulfide couples Cys-277 to Cys-314. Residues 320–344 form a helical membrane-spanning segment; sequence ILLPLIIGLILLGLLALVLIAFCII. Residues 345-354 are Cytoplasmic-facing; that stretch reads RRRPSAYQAL.

The protein belongs to the LAMP family. N- and O-glycosylated. As to expression, highly expressed by blood monocytes and tissue macrophages. Also expressed in lymphocytes, fibroblasts and endothelial cells. Expressed in many tumor cell lines which could allow them to attach to selectins on vascular endothelium, facilitating their dissemination to secondary sites.

The protein localises to the cell membrane. It localises to the endosome membrane. Its subcellular location is the lysosome membrane. Could play a role in phagocytic activities of tissue macrophages, both in intracellular lysosomal metabolism and extracellular cell-cell and cell-pathogen interactions. Binds to tissue- and organ-specific lectins or selectins, allowing homing of macrophage subsets to particular sites. Rapid recirculation of CD68 from endosomes and lysosomes to the plasma membrane may allow macrophages to crawl over selectin-bearing substrates or other cells. This is Macrosialin (CD68) from Homo sapiens (Human).